A 160-amino-acid polypeptide reads, in one-letter code: SsrA-binding protein (160 aa).

This sequence belongs to the SmpB family.

It is found in the cytoplasm. Its function is as follows. Required for rescue of stalled ribosomes mediated by trans-translation. Binds to transfer-messenger RNA (tmRNA), required for stable association of tmRNA with ribosomes. tmRNA and SmpB together mimic tRNA shape, replacing the anticodon stem-loop with SmpB. tmRNA is encoded by the ssrA gene; the 2 termini fold to resemble tRNA(Ala) and it encodes a 'tag peptide', a short internal open reading frame. During trans-translation Ala-aminoacylated tmRNA acts like a tRNA, entering the A-site of stalled ribosomes, displacing the stalled mRNA. The ribosome then switches to translate the ORF on the tmRNA; the nascent peptide is terminated with the 'tag peptide' encoded by the tmRNA and targeted for degradation. The ribosome is freed to recommence translation, which seems to be the essential function of trans-translation. The sequence is that of SsrA-binding protein from Cronobacter sakazakii (strain ATCC BAA-894) (Enterobacter sakazakii).